The primary structure comprises 197 residues: Nucleoid occlusion factor SlmA (197 aa).

The 61-residue stretch at 7 to 67 folds into the HTH tetR-type domain; it reads INRREHILQC…GLIEFIEESL (61 aa). The segment at residues 30–49 is a DNA-binding region (H-T-H motif); sequence TTAKLASEVGVSEAALYRHF. Residues 110–130 are a coiled coil; it reads ALLGENERLRSRISSLFAKIE.

The protein belongs to the nucleoid occlusion factor SlmA family. As to quaternary structure, homodimer. Interacts with FtsZ.

The protein resides in the cytoplasm. Its subcellular location is the nucleoid. In terms of biological role, required for nucleoid occlusion (NO) phenomenon, which prevents Z-ring formation and cell division over the nucleoid. Acts as a DNA-associated cell division inhibitor that binds simultaneously chromosomal DNA and FtsZ, and disrupts the assembly of FtsZ polymers. SlmA-DNA-binding sequences (SBS) are dispersed on non-Ter regions of the chromosome, preventing FtsZ polymerization at these regions. The sequence is that of Nucleoid occlusion factor SlmA from Shewanella sp. (strain W3-18-1).